A 444-amino-acid polypeptide reads, in one-letter code: UDP-N-acetylmuramate--L-alanine ligase (444 aa).

110–116 (GAHGKTS) contributes to the ATP binding site.

This sequence belongs to the MurCDEF family.

The protein resides in the cytoplasm. It carries out the reaction UDP-N-acetyl-alpha-D-muramate + L-alanine + ATP = UDP-N-acetyl-alpha-D-muramoyl-L-alanine + ADP + phosphate + H(+). It participates in cell wall biogenesis; peptidoglycan biosynthesis. In terms of biological role, cell wall formation. The sequence is that of UDP-N-acetylmuramate--L-alanine ligase from Streptococcus pneumoniae (strain JJA).